The following is a 32-amino-acid chain: MSDIN-like toxin proprotein a (32 aa).

A propeptide spanning residues 1-10 is cleaved from the precursor; it reads MSDINATRLP. A cross-link (cyclopeptide (Ile-Pro)) is located at residues 11-18; the sequence is IIGILLPP. Residues 19 to 32 constitute a propeptide that is removed on maturation; sequence CIGDDVTLLLTRGE.

It belongs to the MSDIN fungal toxin family. Processed by the macrocyclase-peptidase enzyme POPB to yield a toxic cyclic octapeptide. POPB first removes 10 residues from the N-terminus. Conformational trapping of the remaining peptide forces the enzyme to release this intermediate rather than proceed to macrocyclization. The enzyme rebinds the remaining peptide in a different conformation and catalyzes macrocyclization of the N-terminal 8 residues.

In terms of biological role, probable toxin that belongs to the MSDIN-like toxin family responsible for a large number of food poisoning cases and deaths. The protein is MSDIN-like toxin proprotein a of Amanita phalloides (Death cap).